A 545-amino-acid chain; its full sequence is Phenylalanine--tRNA ligase beta subunit (545 aa).

The region spanning 268-343 is the B5 domain; that stretch reads FLHKIQNVRE…MSIGYNNLEP (76 aa). Residues Asp321, Asp327, Glu330, and Asp331 each contribute to the Mg(2+) site.

It belongs to the phenylalanyl-tRNA synthetase beta subunit family. Type 2 subfamily. Tetramer of two alpha and two beta subunits. It depends on Mg(2+) as a cofactor.

The protein localises to the cytoplasm. It catalyses the reaction tRNA(Phe) + L-phenylalanine + ATP = L-phenylalanyl-tRNA(Phe) + AMP + diphosphate + H(+). The polypeptide is Phenylalanine--tRNA ligase beta subunit (Saccharolobus islandicus (strain L.S.2.15 / Lassen #1) (Sulfolobus islandicus)).